The sequence spans 124 residues: Protein YebF (124 aa).

Residues M1–A27 form the signal peptide. The YebF/Cmi domain maps to K36–L123. Residues C40 and C113 are joined by a disulfide bond.

This sequence belongs to the YebF family.

The protein localises to the secreted. This Photorhabdus laumondii subsp. laumondii (strain DSM 15139 / CIP 105565 / TT01) (Photorhabdus luminescens subsp. laumondii) protein is Protein YebF.